The sequence spans 34 residues: Sarcoplasmic/endoplasmic reticulum calcium ATPase regulator DWORF (34 aa).

Residues 12–32 traverse the membrane as a helical segment; sequence IVPILLLVGWIVGCIIVIYIV.

As to quaternary structure, homooligomer. Can also form heterooligomers with other sarcoplasmic/endoplasmic reticulum calcium ATPase (SERCA) regulators ARLN, ERLN, PLN and SLN. Monomer. Interacts with ATP2A1/SERCA1; the interaction results in activation of ATP2A1. Interacts as a monomer with ATP2A2/SERCA2; the interaction results in activation of ATP2A2. Highly expressed in heart (at protein level). Detected in heart and soleus, a postural muscle group of the hindlimb containing the highest enrichment of slow-twitch muscle fibers. Also expressed in diaphragm, which contains some slow-twitch fibers. Not detected in the quadriceps, a fast-twitch muscle group, or in cardiac atrial muscle. Not expressed in the prenatal heart but gradually increases in abundance postnatally.

It is found in the sarcoplasmic reticulum membrane. Enhances the activity of ATP2A1/SERCA1 ATPase in sarcoplasmic reticulum by displacing ATP2A1/SERCA1 inhibitors, thereby acting as a key regulator of skeletal muscle activity. Also enhances the activity of the ATP2A2/SERCA2 ATPase. Does not directly stimulate SERCA pump activity. Binds preferentially to the phosphorylated E1 and E2 conformational forms of ATP2A2 which predominate at high Ca(2+) concentrations during the systolic phase of the cardiac cycle. Competes with ATP2A2 inhibitor phospholamban (PLN) for binding to ATP2A2 and displaces PLN. Can activate ATP2A2 directly in the absence of PLN. Also enhances sarcoplasmic reticulum Ca(2+) uptake and myocyte contractility by displacing the SERCA inhibitory peptides sarcolipin (SLN) and myoregulin (MRLN). The polypeptide is Sarcoplasmic/endoplasmic reticulum calcium ATPase regulator DWORF (Mus musculus (Mouse)).